The following is a 422-amino-acid chain: uncharacterized protein (422 aa).

An RRM domain is found at 5 to 83 (CVVYVGNIPY…RRLRVDFPTA (79 aa)). The tract at residues 337–358 (RSSSIPSSGSIRSPSLTTTSAQ) is disordered.

It is found in the nucleus. This is an uncharacterized protein from Schizosaccharomyces pombe (strain 972 / ATCC 24843) (Fission yeast).